The chain runs to 567 residues: Proline--tRNA ligase (567 aa).

Belongs to the class-II aminoacyl-tRNA synthetase family. ProS type 1 subfamily. In terms of assembly, homodimer.

It is found in the cytoplasm. It carries out the reaction tRNA(Pro) + L-proline + ATP = L-prolyl-tRNA(Pro) + AMP + diphosphate. Catalyzes the attachment of proline to tRNA(Pro) in a two-step reaction: proline is first activated by ATP to form Pro-AMP and then transferred to the acceptor end of tRNA(Pro). As ProRS can inadvertently accommodate and process non-cognate amino acids such as alanine and cysteine, to avoid such errors it has two additional distinct editing activities against alanine. One activity is designated as 'pretransfer' editing and involves the tRNA(Pro)-independent hydrolysis of activated Ala-AMP. The other activity is designated 'posttransfer' editing and involves deacylation of mischarged Ala-tRNA(Pro). The misacylated Cys-tRNA(Pro) is not edited by ProRS. This chain is Proline--tRNA ligase, found in Staphylococcus aureus (strain COL).